A 261-amino-acid polypeptide reads, in one-letter code: Polyamine aminopropyltransferase (261 aa).

Residues 1–219 (MHPFRRRVRP…AVMAFRQSPS (219 aa)) enclose the PABS domain. S-methyl-5'-thioadenosine-binding positions include Asp-96 and 124–125 (DG). Asp-142 (proton acceptor) is an active-site residue.

Belongs to the spermidine/spermine synthase family. As to quaternary structure, homodimer or homotetramer.

It localises to the cytoplasm. It carries out the reaction S-adenosyl 3-(methylsulfanyl)propylamine + putrescine = S-methyl-5'-thioadenosine + spermidine + H(+). It participates in amine and polyamine biosynthesis; spermidine biosynthesis; spermidine from putrescine: step 1/1. Functionally, catalyzes the irreversible transfer of a propylamine group from the amino donor S-adenosylmethioninamine (decarboxy-AdoMet) to putrescine (1,4-diaminobutane) to yield spermidine. This is Polyamine aminopropyltransferase from Chromobacterium violaceum (strain ATCC 12472 / DSM 30191 / JCM 1249 / CCUG 213 / NBRC 12614 / NCIMB 9131 / NCTC 9757 / MK).